The sequence spans 146 residues: Large ribosomal subunit protein uL15 (146 aa).

The span at 1–13 (MKLHELKPSEGSR) shows a compositional bias: basic and acidic residues. The disordered stretch occupies residues 1–57 (MKLHELKPSEGSRKTRNRVGRGIGSGNGKTAGKGHKGQNARSGGGVRPGFEGGQMPL). Composition is skewed to gly residues over residues 21–31 (RGIGSGNGKTA) and 42–52 (SGGGVRPGFEG).

Belongs to the universal ribosomal protein uL15 family. Part of the 50S ribosomal subunit.

Functionally, binds to the 23S rRNA. The sequence is that of Large ribosomal subunit protein uL15 from Bacillus subtilis (strain 168).